A 309-amino-acid polypeptide reads, in one-letter code: Glutaminase (309 aa).

7 residues coordinate substrate: Ser65, Asn117, Glu162, Asn169, Tyr193, Tyr245, and Val263.

This sequence belongs to the glutaminase family. As to quaternary structure, homotetramer.

The enzyme catalyses L-glutamine + H2O = L-glutamate + NH4(+). The chain is Glutaminase from Bacillus cytotoxicus (strain DSM 22905 / CIP 110041 / 391-98 / NVH 391-98).